We begin with the raw amino-acid sequence, 415 residues long: Na(+)-translocating NADH-quinone reductase subunit B (415 aa).

The next 4 helical transmembrane spans lie at 23 to 40 (WFALYEAAATLFYTPGLV), 56 to 76 (IMIMVWLAVFPAMFWGMYNAG), 129 to 149 (FLPIYATVFIVGGFWEVLFCM), and 164 to 184 (ILFALIVPPTLPLWQAALGIT). Residue Thr-236 is modified to FMN phosphoryl threonine. Transmembrane regions (helical) follow at residues 275-295 (VSTLALMIGAAFIVYMGIASW), 297-317 (IIGGVMIGMILLSTLFNVIGS), 325-345 (MPWHWHLVLGGFAFGMFFMAT), 358-378 (WAYGILIGVMCVLIRVVNPAY), and 381-401 (GMMLAILFANLFAPLFDHVVV).

Belongs to the NqrB/RnfD family. Composed of six subunits; NqrA, NqrB, NqrC, NqrD, NqrE and NqrF. It depends on riboflavin as a cofactor. The cofactor is FMN.

The protein resides in the cell inner membrane. The enzyme catalyses a ubiquinone + n Na(+)(in) + NADH + H(+) = a ubiquinol + n Na(+)(out) + NAD(+). In terms of biological role, NQR complex catalyzes the reduction of ubiquinone-1 to ubiquinol by two successive reactions, coupled with the transport of Na(+) ions from the cytoplasm to the periplasm. NqrA to NqrE are probably involved in the second step, the conversion of ubisemiquinone to ubiquinol. The protein is Na(+)-translocating NADH-quinone reductase subunit B of Vibrio cholerae serotype O1 (strain ATCC 39541 / Classical Ogawa 395 / O395).